The primary structure comprises 485 residues: Vacuolar fusion protein CCZ1 homolog (485 aa).

It belongs to the CCZ1 family. As to quaternary structure, component of the Mon1-Ccz1 guanyl-nucleotide exchange factor complex made up of Mon1, Ccz1 and Bulli; the interaction of Bulli with the Mon1-Ccz1 heterodimer is mediated via the C-terminal Mic1 domain of Bulli. Mon1 and Ccz1 form a stable complex which displays Rab7 GEF activity with or without Bulli; GEF activity is enhanced by Bulli possibly by improving membrane association of the complex. Interacts with Rab5 and Rab7; preferentially binds GTP-bound Rab5 and GDP-bound Rab7.

It localises to the cytoplasm. Its subcellular location is the cytosol. Its activity is regulated as follows. The Rab7 guanyl-nucleotide exchange factor (GEF) activity of the Mon1-Ccz1 complex is autoinhibited by the N-terminal disordered region of Mon1. GEF activity is stimulated by Rab5-mediated recruitment to membranes. Functionally, part of the Mon1-Ccz1 guanyl-nucleotide exchange factor complex specific for Rab7 that promotes the exchange of GDP to GTP, converting Rab7 from an inactive GDP-bound form into an active GTP-bound form. Required for recruitment of Rab7 to endosomal and autophagosomal membranes to mediate endolysosomal and autolysosomal vesicle maturation. Required for fusion of multivesicular bodies and lysosomes but not their formation or trafficking. Involved in the replacement of Rab5 (and possibly Rab4) with Rab7, also known as Rab conversion or the Rab cascade, during endosomal maturation. The Mon1-Ccz1 complex is recruited to phosphatidylinositol 3-phosphate (PtdIns[3]P) enriched membranes by Rab5, which stimulates recruitment and guanyl-nucleotide exchange of Rab7. Together with Rab7 required for autolysosome formation in fat cells and autophagic degradation during starvation-induced basal and developmental autophagy. This is Vacuolar fusion protein CCZ1 homolog from Drosophila melanogaster (Fruit fly).